The primary structure comprises 161 residues: Effector CFEM5 (161 aa).

A signal peptide spans 1–23 (MFSLTKSVLFTSIVAIAAQATTA). In terms of domain architecture, CFEM spans 24-126 (VSSPTQTSLP…KVLDAVVASA (103 aa)). 3 cysteine pairs are disulfide-bonded: C46–C78, C56–C63, and C65–C100. D60 contacts heme.

It belongs to the RBT5 family. As to quaternary structure, interacts with Z.mays LRR5; the interaction is direct. Interacts with Z.mays WAK17 isoform 2; the interaction is direct.

It is found in the membrane. The protein localises to the secreted. Functionally, suppresses host programmed cell death during infection by binding to Z.mays WAK17 isoform 2 and Z.mays LRR5, to prevent activation of Z.mays WAK17 isoform 1 and the downstream hypersensitive response. In Gibberella zeae (strain ATCC MYA-4620 / CBS 123657 / FGSC 9075 / NRRL 31084 / PH-1) (Wheat head blight fungus), this protein is Effector CFEM5.